The primary structure comprises 368 residues: Histidinol-phosphate aminotransferase (368 aa).

Position 223 is an N6-(pyridoxal phosphate)lysine (lysine 223).

Belongs to the class-II pyridoxal-phosphate-dependent aminotransferase family. Histidinol-phosphate aminotransferase subfamily. As to quaternary structure, homodimer. Pyridoxal 5'-phosphate serves as cofactor.

It catalyses the reaction L-histidinol phosphate + 2-oxoglutarate = 3-(imidazol-4-yl)-2-oxopropyl phosphate + L-glutamate. It functions in the pathway amino-acid biosynthesis; L-histidine biosynthesis; L-histidine from 5-phospho-alpha-D-ribose 1-diphosphate: step 7/9. This is Histidinol-phosphate aminotransferase (hisC) from Sinorhizobium fredii (strain NBRC 101917 / NGR234).